We begin with the raw amino-acid sequence, 190 residues long: CASP-like protein 2U2 (190 aa).

Residues 1–10 (MGEKMQGFQG) are Cytoplasmic-facing. Residues 11–31 (WSIGIRFLTSCVSIASLILLL) traverse the membrane as a helical segment. Residues 32 to 59 (KSKQTVQVSVGLDYVTQQVKYSDTSAFV) are Extracellular-facing. Residues 60-80 (YLVFSDILVAVYCIVVLVGLI) form a helical membrane-spanning segment. Residues 81-94 (PAALGKSHPGKAGQ) are Cytoplasmic-facing. A helical transmembrane segment spans residues 95–115 (WAIFIFDQVLAYVLLAAASSA). The Extracellular portion of the chain corresponds to 116 to 144 (TEVAYLADKGMAKTSWEAVCPRFAHFCHT). Residues 145–165 (VMASISLSFVAVLLLALLAVV) traverse the membrane as a helical segment. Residues 166-190 (SASGLFGRFYRRPLFAVKMRHNTLI) lie on the Cytoplasmic side of the membrane.

The protein belongs to the Casparian strip membrane proteins (CASP) family. As to quaternary structure, homodimer and heterodimers.

It is found in the cell membrane. The chain is CASP-like protein 2U2 from Pteridium aquilinum subsp. aquilinum (Bracken fern).